We begin with the raw amino-acid sequence, 712 residues long: Polyribonucleotide nucleotidyltransferase (712 aa).

Mg(2+) contacts are provided by Asp-487 and Asp-493. In terms of domain architecture, KH spans 554–613 (PKIITMTINPDKIRDVIGPSGKQINKIIEETGVKIDIEQDGTVFISSINQEMNDKAKKII). An S1 motif domain is found at 623–691 (GEIYEAKVKR…KQGRVNLSRK (69 aa)).

The protein belongs to the polyribonucleotide nucleotidyltransferase family. The cofactor is Mg(2+).

It localises to the cytoplasm. The catalysed reaction is RNA(n+1) + phosphate = RNA(n) + a ribonucleoside 5'-diphosphate. Functionally, involved in mRNA degradation. Catalyzes the phosphorolysis of single-stranded polyribonucleotides processively in the 3'- to 5'-direction. In Bacillus cereus (strain ATCC 14579 / DSM 31 / CCUG 7414 / JCM 2152 / NBRC 15305 / NCIMB 9373 / NCTC 2599 / NRRL B-3711), this protein is Polyribonucleotide nucleotidyltransferase.